The primary structure comprises 160 residues: Anaerobic nitrite reductase HBII (160 aa).

Residues 8-157 (GFTEEQEALV…LVAAIKLEMK (150 aa)) enclose the Globin domain. The Homodimerization motif lies at 41-45 (EIAPS). The heme b site is built by Ser-51, Lys-65, His-69, Lys-99, Ser-103, and His-104. Residues 111 to 123 (DEHFEVTKFALLE) carry the Homodimerization motif.

Belongs to the plant globin family. In terms of assembly, homodimer. Heme b serves as cofactor.

The protein localises to the cytoplasm. Its subcellular location is the nucleus. The catalysed reaction is Fe(III)-heme b-[protein] + nitric oxide + H2O = Fe(II)-heme b-[protein] + nitrite + 2 H(+). Phytoglobin that reduces nitrite to nitric oxide (NO) under anoxic conditions (e.g. during flooding or in waterlogged soil) and upon root nodulation. Required for general plant development and during nodulation, especially for the onset of symbiosis. Monitors nitric oxide (NO) levels during early phase of the nitrogen-fixing symbiosis and buffers oxygen in functioning nodules. May not function as an oxygen storage or transport protein. Has an unusually high affinity for O(2) through a hexacoordinate heme iron because of a very low dissociation constant. The polypeptide is Anaerobic nitrite reductase HBII (Casuarina glauca (Swamp oak)).